The primary structure comprises 381 residues: Class E basic helix-loop-helix protein 22 (381 aa).

Disordered regions lie at residues 30–94 (RLEA…GGGG), 135–154 (RGSV…DSDG), and 188–242 (HLHG…EQKA). The span at 82 to 94 (GGGGGSAGSGGGG) shows a compositional bias: gly residues. A compositionally biased stretch (gly residues) spans 198 to 225 (GGLGGGGGGGSSSGSSGGGGGSGSGSGG). Residues 242-296 (ALRLNINARERRRMHDLNDALDELRAVIPYAHSPSVRKLSKIATLLLAKNYILMQ) form the bHLH domain.

As to quaternary structure, interacts with PRDM8. In terms of tissue distribution, brain-specific, with the highest expression in the cerebellum.

Its subcellular location is the nucleus. Its function is as follows. Inhibits DNA binding of TCF3/E47 homodimers and TCF3 (E47)/NEUROD1 heterodimers and acts as a strong repressor of Neurod1 and Myod-responsive genes, probably by heterodimerization with class a basic helix-loop-helix factors. Despite the presence of an intact basic domain, does not bind to DNA. In the brain, may function as an area-specific transcription factor that regulates the postmitotic acquisition of area identities and elucidate the genetic hierarchy between progenitors and postmitotic neurons driving neocortical arealization. May be required for the survival of a specific population of inhibitory neurons in the superficial laminae of the spinal cord dorsal horn that may regulate pruritis. Seems to play a crucial role in the retinogenesis, in the specification of amacrine and bipolar subtypes. Forms with PRDM8 a transcriptional repressor complex controlling genes involved in neural development and neuronal differentiation. This Homo sapiens (Human) protein is Class E basic helix-loop-helix protein 22 (BHLHE22).